The chain runs to 475 residues: Siroheme synthase (475 aa).

A precorrin-2 dehydrogenase /sirohydrochlorin ferrochelatase region spans residues 1 to 204; sequence MDYLPVFLNI…GRDQAAQDYL (204 aa). Residues 22–23 and 43–44 each bind NAD(+); these read EI and PA. S129 is subject to Phosphoserine. A uroporphyrinogen-III C-methyltransferase region spans residues 218 to 475; sequence GEVYLVGAGP…MGTSSGPGYP (258 aa). P227 is a binding site for S-adenosyl-L-methionine. D250 functions as the Proton acceptor in the catalytic mechanism. The Proton donor role is filled by K272. Residues 303 to 305, I308, 333 to 334, M385, and G414 contribute to the S-adenosyl-L-methionine site; these read GGD and TA.

In the N-terminal section; belongs to the precorrin-2 dehydrogenase / sirohydrochlorin ferrochelatase family. This sequence in the C-terminal section; belongs to the precorrin methyltransferase family.

It carries out the reaction uroporphyrinogen III + 2 S-adenosyl-L-methionine = precorrin-2 + 2 S-adenosyl-L-homocysteine + H(+). The enzyme catalyses precorrin-2 + NAD(+) = sirohydrochlorin + NADH + 2 H(+). It catalyses the reaction siroheme + 2 H(+) = sirohydrochlorin + Fe(2+). Its pathway is cofactor biosynthesis; adenosylcobalamin biosynthesis; precorrin-2 from uroporphyrinogen III: step 1/1. It participates in cofactor biosynthesis; adenosylcobalamin biosynthesis; sirohydrochlorin from precorrin-2: step 1/1. It functions in the pathway porphyrin-containing compound metabolism; siroheme biosynthesis; precorrin-2 from uroporphyrinogen III: step 1/1. The protein operates within porphyrin-containing compound metabolism; siroheme biosynthesis; siroheme from sirohydrochlorin: step 1/1. Its pathway is porphyrin-containing compound metabolism; siroheme biosynthesis; sirohydrochlorin from precorrin-2: step 1/1. In terms of biological role, multifunctional enzyme that catalyzes the SAM-dependent methylations of uroporphyrinogen III at position C-2 and C-7 to form precorrin-2 via precorrin-1. Then it catalyzes the NAD-dependent ring dehydrogenation of precorrin-2 to yield sirohydrochlorin. Finally, it catalyzes the ferrochelation of sirohydrochlorin to yield siroheme. In Nitrosomonas europaea (strain ATCC 19718 / CIP 103999 / KCTC 2705 / NBRC 14298), this protein is Siroheme synthase.